The following is a 121-amino-acid chain: Structural protein p14.5 (121 aa).

Disordered stretches follow at residues 1 to 24 (MADF…IGSL) and 84 to 121 (TSLV…HKSK). N-acetylalanine; by host is present on A2. Positions 104–121 (KPKKKKHLFPKLSSHKSK) are enriched in basic residues.

Belongs to the asfivirus structural protein p14.5 family. In terms of assembly, interacts with the major capsid protein. Interacts with host IRF3; this interaction interferes with the recruitment of IRF3 to TBK1. In terms of processing, acetylated.

It localises to the virion. Functionally, structural protein required for transport of intracellular particles from the assembly sites to the plasma membrane. Binds to both ssDNA and dsDNA. Suppressed the activation of the cGAS/STING pathway by interfering with the recruitment of IRF3 to TBK1, which in turn suppresses IRF3 phosphorylation, decreasing interferon production. The polypeptide is Structural protein p14.5 (Ornithodoros (relapsing fever ticks)).